Reading from the N-terminus, the 162-residue chain is Sorting nexin-3 (162 aa).

Ala2 carries the post-translational modification N-acetylalanine. Positions 27-151 constitute a PX domain; it reads NFLEIDVSNP…HMFLQDEIID (125 aa). Residue Arg43 is modified to Omega-N-methylarginine. Residues Arg70, Ser72, Lys95, and Arg118 each coordinate a 1,2-diacyl-sn-glycero-3-phospho-(1D-myo-inositol-3-phosphate). Residue Ser72 is modified to Phosphoserine. A Glycyl lysine isopeptide (Lys-Gly) (interchain with G-Cter in SUMO2) cross-link involves residue Lys95. The tract at residues 147 to 162 is binds predominantly to PtdIns(P5) and weaker to PtdIns(P3) abd PtdIns(P4); involved in neurite outgrowth regulation; the sequence is DEIIDKSYTPSKIRHA.

The protein belongs to the sorting nexin family. Interacts with VPS26A, VPS29. Interacts with VPS35; the interaction with VPS35 is direct. The association with the retromer CSC subcomplex subunits is proposed to represent a functional distinct retromer variant described as SNX3-retromer complex. Interacts with USP10 and SCNN1A. Interacts with TRFC. Interacts with SNX8; 2 molecules of SNX8 seems to associate with one molecule of SNX3. Interacts with PTPRU. Interacts with MON2 and DOP1B. Post-translationally, ubiquitinated, leading to its proteasomal degradation. Deubiquitinated by USP10. Highly expressed in developing red cells and hematopoietic tissues.

It is found in the early endosome. It localises to the cytoplasmic vesicle. The protein localises to the phagosome. Functionally, phosphoinositide-binding protein required for multivesicular body formation. Specifically binds phosphatidylinositol 3-phosphate (PtdIns(P3)). Can also bind phosphatidylinositol 4-phosphate (PtdIns(P4)), phosphatidylinositol 5-phosphate (PtdIns(P5)) and phosphatidylinositol 3,5-biphosphate (PtdIns(3,5)P2). Plays a role in protein transport between cellular compartments. Together with RAB7A facilitates endosome membrane association of the retromer cargo-selective subcomplex (CSC). May act in part as component of the SNX3-retromer complex which mediates the retrograde endosome-to-TGN transport of WLS distinct from the SNX-BAR retromer pathway. Promotes stability and cell surface expression of epithelial sodium channel (ENAC) subunits SCNN1A and SCNN1G. Not involved in EGFR degradation. Involved in the regulation of phagocytosis in dendritic cells possibly by regulating EEA1 recruitment to the nascent phagosomes. Involved in iron homeostasis through regulation of endocytic recycling of the transferrin receptor Tfrc presuambly by delivering the transferrin:transferrin receptor complex to recycling endosomes; the function may involve the CSC retromer subcomplex. Involved in regulation of neurite outgrowth in primary neurons. The chain is Sorting nexin-3 (Snx3) from Mus musculus (Mouse).